The following is a 146-amino-acid chain: Catabolic 3-dehydroquinase (146 aa).

The active-site Proton acceptor is Tyr-24. Residues Asn-78, His-84, and Asp-91 each contribute to the substrate site. His-104 (proton donor) is an active-site residue. Residues 105 to 106 and Arg-115 contribute to the substrate site; that span reads IT.

Belongs to the type-II 3-dehydroquinase family. As to quaternary structure, homododecamer. Adopts a ring-like structure, composed of an arrangement of two hexameric rings stacked on top of one another.

It catalyses the reaction 3-dehydroquinate = 3-dehydroshikimate + H2O. It participates in aromatic compound metabolism; 3,4-dihydroxybenzoate biosynthesis; 3,4-dihydroxybenzoate from 3-dehydroquinate: step 1/2. Functionally, is involved in the catabolism of quinate. Allows the utilization of quinate as carbon source via the beta-ketoadipate pathway. This chain is Catabolic 3-dehydroquinase, found in Scheffersomyces stipitis (strain ATCC 58785 / CBS 6054 / NBRC 10063 / NRRL Y-11545) (Yeast).